Reading from the N-terminus, the 624-residue chain is Chitin elicitor receptor kinase 1 (624 aa).

Residues 1 to 18 form the signal peptide; it reads MEASTSLLVLVLAAAAFA. At 19–240 the chain is on the extracellular side; that stretch reads AGTVTEAAGD…SPGKGASAGA (222 aa). 3 disulfides stabilise this stretch: cysteine 30-cysteine 93, cysteine 34-cysteine 160, and cysteine 91-cysteine 158. Asparagine 48 carries N-linked (GlcNAc...) asparagine glycosylation. 115–121 is a chitin binding site; the sequence is RGQIYTS. Residue asparagine 128 is glycosylated (N-linked (GlcNAc...) asparagine). Residue 142-148 coordinates chitin; that stretch reads PANNIPD. 2 N-linked (GlcNAc...) asparagine glycosylation sites follow: asparagine 153 and asparagine 157. Residues 173–218 enclose the LysM domain; that stretch reads LTYPLRAEDTLASVAATYGLSSQLDVVRRYNPGMESATGSGIVYIP. An N-linked (GlcNAc...) asparagine glycan is attached at asparagine 223. Residues 241–261 form a helical membrane-spanning segment; the sequence is IAGGVVAGVVVLAAIFLYIIF. Residues 262–624 lie on the Cytoplasmic side of the membrane; the sequence is YRRRKAKQAT…QGLVNLMSGR (363 aa). Positions 324 to 599 constitute a Protein kinase domain; the sequence is FSIGNKIGQG…RSVVVALMTL (276 aa). ATP contacts are provided by residues 330–338 and lysine 351; that span reads IGQGGFGAV. Aspartate 443 acts as the Proton acceptor in catalysis.

This sequence belongs to the protein kinase superfamily. Ser/Thr protein kinase family. As to quaternary structure, homooligomer. Interacts with CEBIP. Interacts with LYP4 and LYP6. Interacts with RLCK176. Post-translationally, autophosphorylated; induced by chitin and derivatives. In terms of tissue distribution, expressed in seedlings, roots, shoots and stems, and, to a lower extent, in flowers.

The protein localises to the cell membrane. It catalyses the reaction L-seryl-[protein] + ATP = O-phospho-L-seryl-[protein] + ADP + H(+). It carries out the reaction L-threonyl-[protein] + ATP = O-phospho-L-threonyl-[protein] + ADP + H(+). Its function is as follows. Lysin motif (LysM) receptor kinase required as a cell surface receptor for chitin elicitor (chitooligosaccharides) signaling leading to innate immunity in response to biotic stresses. Involved in the resistance to pathogenic fungi, probably by sensing microbe-associated molecular patterns (MAMP) and pathogen-associated molecular patterns (PAMP). Involved in the detection of microbial peptidoglycans (PGNs) and mediates PGN response. Plays dual roles in PGN and chitin signaling during innate immunity. Acts as an adapter for LYP4 and LYP6 and mediates signal transduction from the extracellular to intracellular spaces. Participates in the activation of defense genes during response to PGN and chitin. Phosphorylates the downstream partner RLCK185 in response to chitin elicitation. In Oryza sativa subsp. japonica (Rice), this protein is Chitin elicitor receptor kinase 1.